Here is a 293-residue protein sequence, read N- to C-terminus: Movement protein BC1 (293 aa).

The interval 207-228 (SWASRSTIGPSPSYAGSDQGDA) is disordered. Positions 209–222 (ASRSTIGPSPSYAG) are enriched in polar residues.

The protein belongs to the begomovirus movement protein BC1 family. In terms of assembly, binds to dimeric supercoiled plasmid DNA. In terms of processing, phosphorylated.

The protein resides in the host cell membrane. Its subcellular location is the host microsome membrane. It localises to the host endoplasmic reticulum membrane. Movement protein involved in the cell-to-cell and systemic transport of viral genomic DNA. Begomoviruses use 2 proteins to transport their DNA from cell to cell. The nuclear shuttle protein (NSP) shuttles it between nucleus and cytoplasm and the movement protein (MP) probably transports the DNA-NSP complex to the cell periphery and facilitates further movement across the cell wall. The chain is Movement protein BC1 from Tomato golden mosaic virus (strain Yellow vein) (TGMV).